The following is a 1046-amino-acid chain: Piwi-like protein 2 (1046 aa).

Pro residues predominate over residues 1 to 12 (MDPKRPTFPSPP). Residues 1–35 (MDPKRPTFPSPPGVIRAPWQQSTEDQSQLLDQPSL) are disordered. The span at 19-31 (WQQSTEDQSQLLD) shows a compositional bias: polar residues. The region spanning 462–575 (SVLDVMNLIY…LLPELSFMTG (114 aa)) is the PAZ domain. The Piwi domain maps to 741–1032 (LVVCIMTGNR…LAFLSGQYLH (292 aa)). Residues Asp-818, Glu-856, Asp-888, and His-1021 contribute to the active site.

This sequence belongs to the argonaute family. Piwi subfamily. In terms of assembly, component of the PET complex. Requires Mg(2+) as cofactor. Methylated on arginine residues; required for the interaction with Tudor domain-containing protein and subsequent localization to the meiotic nuage, also named P granule. Detected in primordial germ cells (PGCs) from 3 dpf. In adult, it is found in both the female and male gonad. In the ovary, it is present in all stages of germ cell differentiation. In testis, it is present in mitotic and meiotic germ cells. No protein has been detected in the fully differentiated sperm cell.

It localises to the cytoplasm. The protein resides in the nucleus. In terms of biological role, endoribonuclease that plays a central role during spermatogenesis by repressing transposable elements and preventing their mobilization, which is essential for the germline integrity. Plays an essential role in germ cell differentiation and meiosis, independently of the function in transposable elements repression. Acts via the piRNA metabolic process, which mediates the repression of transposable elements during meiosis by forming complexes composed of piRNAs and Piwi proteins and govern the methylation and subsequent repression of transposons. During piRNA biosynthesis, plays a key role in the piRNA amplification loop, also named ping-pong amplification cycle, by acting as a 'slicer-competent' piRNA endoribonuclease that cleaves primary piRNAs, which are then loaded onto 'slicer-incompetent' piwil4. Piwil2 slicing produces a pre-miRNA intermediate, which is then processed in mature piRNAs, and as well as a 16 nucleotide by-product that is degraded. Required for piwil4/miwi2 nuclear localization and association with secondary piRNAs antisense. Represses circadian rhythms by promoting the stability and activity of core clock components BMAL1 and CLOCK. The chain is Piwi-like protein 2 (piwil2) from Danio rerio (Zebrafish).